Consider the following 231-residue polypeptide: Ferritin light chain (231 aa).

The N-terminal stretch at 1 to 19 (MKMLILAVSCLLAITGSLA) is a signal peptide. Cys23 and Cys43 form a disulfide bridge. The Ferritin-like diiron domain occupies 50–208 (YGSHGNVATE…GHTSDLKKFI (159 aa)). Asn134 carries N-linked (GlcNAc...) asparagine glycosylation.

It belongs to the ferritin family. Oligomer of 12 light (L) chains and 12 heavy (H) chains; L and H chains are disulfide-linked. The functional molecule forms a roughly spherical shell with a diameter of 12 nm and contains a central cavity into which the insoluble ferric iron core is deposited.

The protein localises to the golgi apparatus. Its subcellular location is the secreted. In terms of biological role, stores iron in a soluble, non-toxic, readily available form. Important for iron homeostasis. Iron is taken up in the ferrous form and deposited as ferric hydroxides after oxidation. Ferritin is composed of a heavy (H) chain which is responsible for the oxidation and uptake of ferrous iron, and a light (L) chain which facilitates the nucleation of the ferrihydrite iron core. In Trichoplusia ni (Cabbage looper), this protein is Ferritin light chain.